The primary structure comprises 341 residues: Anthranilate phosphoribosyltransferase (341 aa).

5-phospho-alpha-D-ribose 1-diphosphate-binding positions include Gly80, 83–84 (GD), Thr88, 90–93 (NIST), 108–116 (KHGNRSVSS), and Ser120. Position 80 (Gly80) interacts with anthranilate. Ser92 lines the Mg(2+) pocket. Asn111 contributes to the anthranilate binding site. Anthranilate is bound at residue Arg166. Residues Asp225 and Glu226 each coordinate Mg(2+).

Belongs to the anthranilate phosphoribosyltransferase family. As to quaternary structure, homodimer. Mg(2+) serves as cofactor.

It catalyses the reaction N-(5-phospho-beta-D-ribosyl)anthranilate + diphosphate = 5-phospho-alpha-D-ribose 1-diphosphate + anthranilate. It participates in amino-acid biosynthesis; L-tryptophan biosynthesis; L-tryptophan from chorismate: step 2/5. Functionally, catalyzes the transfer of the phosphoribosyl group of 5-phosphorylribose-1-pyrophosphate (PRPP) to anthranilate to yield N-(5'-phosphoribosyl)-anthranilate (PRA). The sequence is that of Anthranilate phosphoribosyltransferase from Shouchella clausii (strain KSM-K16) (Alkalihalobacillus clausii).